Here is a 134-residue protein sequence, read N- to C-terminus: MGRDTLADIITSIRNADMDRKGTVRIPSTNITENIIKILLREGFIENVRKHQEGNFFFFALTLRHRRNRKGPCRTSLNLKRISRPGLRIYSNYQQIPRILGGMGIVILSTSRGIMTDREARLERIGGEILCYIW.

Belongs to the universal ribosomal protein uS8 family. Part of the 30S ribosomal subunit.

It is found in the plastid. It localises to the chloroplast. Functionally, one of the primary rRNA binding proteins, it binds directly to 16S rRNA central domain where it helps coordinate assembly of the platform of the 30S subunit. The sequence is that of Small ribosomal subunit protein uS8c (rps8) from Populus alba (White poplar).